Here is a 402-residue protein sequence, read N- to C-terminus: S-adenosylmethionine synthase (402 aa).

Histidine 16 provides a ligand contact to ATP. Aspartate 18 contacts Mg(2+). Glutamate 44 lines the K(+) pocket. Positions 57 and 109 each coordinate L-methionine. The tract at residues 109 to 119 (QSAHIAQGVDA) is flexible loop. ATP contacts are provided by residues 174–176 (DTK), aspartate 252, 258–259 (RK), alanine 275, and lysine 279. Aspartate 252 provides a ligand contact to L-methionine. An L-methionine-binding site is contributed by lysine 283.

Belongs to the AdoMet synthase family. In terms of assembly, homotetramer; dimer of dimers. The cofactor is Mg(2+). K(+) is required as a cofactor.

It is found in the cytoplasm. It catalyses the reaction L-methionine + ATP + H2O = S-adenosyl-L-methionine + phosphate + diphosphate. It participates in amino-acid biosynthesis; S-adenosyl-L-methionine biosynthesis; S-adenosyl-L-methionine from L-methionine: step 1/1. In terms of biological role, catalyzes the formation of S-adenosylmethionine (AdoMet) from methionine and ATP. The overall synthetic reaction is composed of two sequential steps, AdoMet formation and the subsequent tripolyphosphate hydrolysis which occurs prior to release of AdoMet from the enzyme. The sequence is that of S-adenosylmethionine synthase from Rhizorhabdus wittichii (strain DSM 6014 / CCUG 31198 / JCM 15750 / NBRC 105917 / EY 4224 / RW1) (Sphingomonas wittichii).